The sequence spans 60 residues: MAVPARRTSKAKKNKRRTHYKVTAPSVTFDETTGDYSRSHRVSLKGYYKGRKIAKAAAAE.

Belongs to the bacterial ribosomal protein bL32 family.

This chain is Large ribosomal subunit protein bL32, found in Streptococcus gordonii (strain Challis / ATCC 35105 / BCRC 15272 / CH1 / DL1 / V288).